Consider the following 140-residue polypeptide: Cytochrome b (140 aa).

Residues 38–58 (FFALHFLLPFVLAALVIMHLI) form a helical membrane-spanning segment. Residues His42 and His56 each coordinate heme b. A ubiquinone is bound at residue His61. A helical membrane pass occupies residues 85-105 (FVFKDLVTIFIFFIVLSIFVF).

It belongs to the cytochrome b family. Fungal cytochrome b-c1 complex contains 10 subunits; 3 respiratory subunits, 2 core proteins and 5 low-molecular weight proteins. Cytochrome b-c1 complex is a homodimer. Requires heme b as cofactor.

The protein resides in the mitochondrion inner membrane. In terms of biological role, component of the ubiquinol-cytochrome c reductase complex (complex III or cytochrome b-c1 complex) that is part of the mitochondrial respiratory chain. The b-c1 complex mediates electron transfer from ubiquinol to cytochrome c. Contributes to the generation of a proton gradient across the mitochondrial membrane that is then used for ATP synthesis. The polypeptide is Cytochrome b (cob) (Aspergillus terreus).